Reading from the N-terminus, the 443-residue chain is Methylenetetrahydrofolate--tRNA-(uracil-5-)-methyltransferase TrmFO (443 aa).

8–13 (GAGLAG) contacts FAD.

The protein belongs to the MnmG family. TrmFO subfamily. FAD serves as cofactor.

The protein localises to the cytoplasm. It catalyses the reaction uridine(54) in tRNA + (6R)-5,10-methylene-5,6,7,8-tetrahydrofolate + NADH + H(+) = 5-methyluridine(54) in tRNA + (6S)-5,6,7,8-tetrahydrofolate + NAD(+). The catalysed reaction is uridine(54) in tRNA + (6R)-5,10-methylene-5,6,7,8-tetrahydrofolate + NADPH + H(+) = 5-methyluridine(54) in tRNA + (6S)-5,6,7,8-tetrahydrofolate + NADP(+). Catalyzes the folate-dependent formation of 5-methyl-uridine at position 54 (M-5-U54) in all tRNAs. The sequence is that of Methylenetetrahydrofolate--tRNA-(uracil-5-)-methyltransferase TrmFO from Thermus thermophilus (strain ATCC 27634 / DSM 579 / HB8).